Consider the following 123-residue polypeptide: Small ribosomal subunit protein uS12 (123 aa).

Asp-89 is modified (3-methylthioaspartic acid).

It belongs to the universal ribosomal protein uS12 family. In terms of assembly, part of the 30S ribosomal subunit. Contacts proteins S8 and S17. May interact with IF1 in the 30S initiation complex.

Functionally, with S4 and S5 plays an important role in translational accuracy. Interacts with and stabilizes bases of the 16S rRNA that are involved in tRNA selection in the A site and with the mRNA backbone. Located at the interface of the 30S and 50S subunits, it traverses the body of the 30S subunit contacting proteins on the other side and probably holding the rRNA structure together. The combined cluster of proteins S8, S12 and S17 appears to hold together the shoulder and platform of the 30S subunit. This chain is Small ribosomal subunit protein uS12, found in Rhodopseudomonas palustris (strain BisA53).